The primary structure comprises 501 residues: Glycerol kinase (501 aa).

Residue threonine 12 participates in ADP binding. Residues threonine 12, threonine 13, and serine 14 each coordinate ATP. Position 12 (threonine 12) interacts with sn-glycerol 3-phosphate. Arginine 16 contacts ADP. Sn-glycerol 3-phosphate contacts are provided by arginine 82, glutamate 83, tyrosine 135, and aspartate 244. Glycerol contacts are provided by arginine 82, glutamate 83, tyrosine 135, aspartate 244, and glutamine 245. ADP-binding residues include threonine 266, glycine 309, glycine 409, and asparagine 413. ATP-binding residues include threonine 266, glycine 309, and glycine 409.

It belongs to the FGGY kinase family.

It carries out the reaction glycerol + ATP = sn-glycerol 3-phosphate + ADP + H(+). It functions in the pathway polyol metabolism; glycerol degradation via glycerol kinase pathway; sn-glycerol 3-phosphate from glycerol: step 1/1. Inhibited by fructose 1,6-bisphosphate (FBP). Functionally, key enzyme in the regulation of glycerol uptake and metabolism. Catalyzes the phosphorylation of glycerol to yield sn-glycerol 3-phosphate. The sequence is that of Glycerol kinase from Coxiella burnetii (strain Dugway 5J108-111).